The sequence spans 242 residues: MLWLDLGNTRLKYWLTDDIGQIVSHDAKQHLQAPAELLMGLIDRFERYAPDFIGISSVLGDDLNIKVSETLSRLNIPFEFVHVDANYPLMKSAYNDEQLGCDRWLQMLGAVDRTKRQCVIGCGTAVTIDLIDHAEHLGGYIFPSIYLQRESLFSGTKQITISNGTFDNVSQGLTTQDAVHRGILLSIVGAINEISTRHPNFEVIMTGGDAAIIAQHVNRPVRLRDDLLLNGLARYFDHSKQA.

An ATP-binding site is contributed by 5–12; sequence DLGNTRLK. Residues Tyr94 and 100–103 contribute to the substrate site; that span reads GCDR. Asp102 serves as the catalytic Proton acceptor. Thr124 provides a ligand contact to ATP. Thr175 serves as a coordination point for substrate.

It belongs to the type III pantothenate kinase family. Homodimer. It depends on NH4(+) as a cofactor. K(+) is required as a cofactor.

Its subcellular location is the cytoplasm. It catalyses the reaction (R)-pantothenate + ATP = (R)-4'-phosphopantothenate + ADP + H(+). It functions in the pathway cofactor biosynthesis; coenzyme A biosynthesis; CoA from (R)-pantothenate: step 1/5. In terms of biological role, catalyzes the phosphorylation of pantothenate (Pan), the first step in CoA biosynthesis. The sequence is that of Type III pantothenate kinase from Psychrobacter cryohalolentis (strain ATCC BAA-1226 / DSM 17306 / VKM B-2378 / K5).